Here is a 352-residue protein sequence, read N- to C-terminus: Protein AMBP (352 aa).

Positions methionine 1–alanine 19 are cleaved as a signal peptide. 2 residues coordinate 3-hydroxy-L-kynurenine: cysteine 53 and lysine 111. Cysteines 91 and 188 form a disulfide. The N-linked (GlcNAc...) asparagine glycan is linked to asparagine 115. Lysine 137 and lysine 149 together coordinate 3-hydroxy-L-kynurenine. Residue serine 215 is glycosylated (O-linked (Xyl...) (chondroitin sulfate) serine). Residues asparagine 223 and asparagine 250 are each glycosylated (N-linked (GlcNAc...) asparagine). Intrachain disulfides connect cysteine 231-cysteine 281, cysteine 240-cysteine 264, cysteine 256-cysteine 277, cysteine 287-cysteine 337, cysteine 296-cysteine 320, and cysteine 312-cysteine 333. BPTI/Kunitz inhibitor domains lie at cysteine 231–cysteine 281 and cysteine 287–cysteine 337.

In the N-terminal section; belongs to the calycin superfamily. Lipocalin family. In terms of assembly, monomer. Homodimer. In plasma, it occurs as a monomer or dimer and in covalently-linked complexes with immunoglobulin A (IgA), ALB/albumin and F2/prothrombin. Chromophore-bound alpha-1-microglobulin interacts with the constant region of immunoglobulin A. Chromophore-bound alpha-1-microglobulin interacts with ALB with molar ratio 2:1 and 1:1; this interaction does not prevent fatty acid binding to ALB. Interacts with F2/prothrombin (via N-terminus) with molar ratio 2:1 and 1:1; this interaction does not prevent the activation of prothrombin to thrombin. Interacts with NDUFAB1, a subunit of mitochondrial complex I. Interacts with FN1. As to quaternary structure, I-alpha-I plasma protease inhibitors are assembled from one or two heavy chains (HC) and one light chain, bikunin. Inter-alpha-inhibitor (I-alpha-I) is composed of ITIH1/HC1, ITIH2/HC2 and bikunin, and pre-alpha-inhibitor (P-alpha-I) of ITIH3/HC3 and bikunin. Interacts with TNFAIP6 (via Link domain). Monomer. Also occurs as a complex with tryptase in mast cells. In terms of processing, the precursor is proteolytically processed into separately functioning proteins. 3-hydroxykynurenine, an oxidized tryptophan metabolite that is common in biological fluids, reacts with Cys-53, Lys-111, Lys-137, and Lys-149 to form heterogeneous polycyclic chromophores including hydroxanthommatin. The reaction by alpha-1-microglobulin is autocatalytic; the human protein forms chromophore even when expressed in insect and bacterial cells. The chromophore can react with accessible cysteines forming non-reducible thioether cross-links with other molecules of alpha-1-microglobulin or with other proteins such as Ig alpha-1 chain C region 'Cys-352'. Post-translationally, heavy chains are interlinked with bikunin via a chondroitin 4-sulfate bridge to the C-terminal aspartate. In terms of processing, proteolytically cleaved by PRSS3 at Kunitz domain 2. Expressed by the liver and secreted in plasma.

It localises to the secreted. It is found in the endoplasmic reticulum. The protein resides in the cytoplasm. Its subcellular location is the cytosol. The protein localises to the cell membrane. It localises to the nucleus membrane. It is found in the mitochondrion inner membrane. The protein resides in the extracellular space. Its subcellular location is the extracellular matrix. Functionally, antioxidant and tissue repair protein with reductase, heme-binding and radical-scavenging activities. Removes and protects against harmful oxidants and repairs macromolecules in intravascular and extravascular spaces and in intracellular compartments. Intravascularly, plays a regulatory role in red cell homeostasis by preventing heme- and reactive oxygen species-induced cell damage. Binds and degrades free heme to protect fetal and adult red blood cells from hemolysis. Reduces extracellular methemoglobin, a Fe3+ (ferric) form of hemoglobin that cannot bind oxygen, back to the Fe2+ (ferrous) form deoxyhemoglobin, which has oxygen-carrying potential. Upon acute inflammation, inhibits oxidation of low-density lipoprotein particles by MPO and limits vascular damage. Extravascularly, protects from oxidation products formed on extracellular matrix structures and cell membranes. Catalyzes the reduction of carbonyl groups on oxidized collagen fibers and preserves cellular and extracellular matrix ultrastructures. Importantly, counteracts the oxidative damage at blood-placenta interface, preventing leakage of free fetal hemoglobin into the maternal circulation. Intracellularly, has a role in maintaining mitochondrial redox homeostasis. Bound to complex I of the respiratory chain of mitochondria, may scavenge free radicals and preserve mitochondrial ATP synthesis. Protects renal tubule epithelial cells from heme-induced oxidative damage to mitochondria. Reduces cytochrome c from Fe3+ (ferric) to the Fe2+ (ferrous) state through formation of superoxide anion radicals in the presence of ascorbate or NADH/NADPH electron donor cofactors, ascorbate being the preferred cofactor. Has a chaperone role in facilitating the correct folding of bikunin in the endoplasmic reticulum compartment. Kunitz-type serine protease inhibitor and structural component of extracellular matrix with a role in extracellular space remodeling and cell adhesion. Among others, has antiprotease activity toward kallikrein, a protease involved in airway inflammation; inhibits GZMK/granzyme, a granule-stored serine protease involved in NK and T cell cytotoxic responses; and inhibits PLG/plasmin, a protease required for activation of matrix metalloproteinases. As part of I-alpha-I complex, provides for the heavy chains to be transferred from I-alpha-I complex to hyaluronan in the presence of TNFAIP6, in a dynamic process that releases free bikunin and remodels extracellular matrix proteoglycan structures. Free bikunin, but not its heavy chain-bound form, acts as a potent protease inhibitor in airway secretions. Part of hyaluronan-rich extracellular matrix that surrounds oocyte during cumulus oophorus expansion, an indispensable process for proper ovulation. Also inhibits calcium oxalate crystallization. Its function is as follows. Kunitz-type serine protease inhibitor. Has high catalytic efficiency for F10/blood coagulation factor Xa and may act as an anticoagulant by inhibiting prothrombin activation. Inhibits trypsin and mast cell CMA1/chymase and tryptase proteases. This Bos taurus (Bovine) protein is Protein AMBP (AMBP).